Here is a 127-residue protein sequence, read N- to C-terminus: Small ribosomal subunit protein uS13 (127 aa).

Residues 90–127 (RRHRQGLPVRGQRTRTNARTRRGRRVTVAGKKKAPSKK) are disordered. Positions 101–127 (QRTRTNARTRRGRRVTVAGKKKAPSKK) are enriched in basic residues.

Belongs to the universal ribosomal protein uS13 family. Part of the 30S ribosomal subunit. Forms a loose heterodimer with protein S19. Forms two bridges to the 50S subunit in the 70S ribosome.

In terms of biological role, located at the top of the head of the 30S subunit, it contacts several helices of the 16S rRNA. In the 70S ribosome it contacts the 23S rRNA (bridge B1a) and protein L5 of the 50S subunit (bridge B1b), connecting the 2 subunits; these bridges are implicated in subunit movement. Contacts the tRNAs in the A and P-sites. This Rippkaea orientalis (strain PCC 8801 / RF-1) (Cyanothece sp. (strain PCC 8801)) protein is Small ribosomal subunit protein uS13.